A 275-amino-acid chain; its full sequence is Phosphonoacetaldehyde hydrolase (275 aa).

Aspartate 15 (nucleophile) is an active-site residue. Mg(2+)-binding residues include aspartate 15 and alanine 17. Lysine 56 acts as the Schiff-base intermediate with substrate in catalysis. Aspartate 189 lines the Mg(2+) pocket.

It belongs to the HAD-like hydrolase superfamily. PhnX family. Homodimer. Mg(2+) serves as cofactor.

The catalysed reaction is phosphonoacetaldehyde + H2O = acetaldehyde + phosphate + H(+). Involved in phosphonate degradation. The protein is Phosphonoacetaldehyde hydrolase of Pseudomonas fluorescens (strain SBW25).